Consider the following 563-residue polypeptide: Cystathionine gamma-synthase 1, chloroplastic (563 aa).

A chloroplast-targeting transit peptide spans 1–68 (MAVSSFQCPT…SRILRFPPNF (68 aa)). Tyr-226, Arg-228, Gly-256, Met-257, Tyr-281, Ser-376, and Thr-378 together coordinate pyridoxal 5'-phosphate. Residue Lys-379 is modified to N6-(pyridoxal phosphate)lysine.

It belongs to the trans-sulfuration enzymes family. It depends on pyridoxal 5'-phosphate as a cofactor.

It localises to the plastid. It is found in the chloroplast. The enzyme catalyses O-phospho-L-homoserine + L-cysteine = L,L-cystathionine + phosphate. It carries out the reaction O-succinyl-L-homoserine + L-cysteine = L,L-cystathionine + succinate + H(+). Its pathway is amino-acid biosynthesis; L-methionine biosynthesis via de novo pathway; L-cystathionine from O-succinyl-L-homoserine: step 1/1. With respect to regulation, inhibited by propargylglycine. Catalyzes the first committed step of methionine (Met) biosynthesis. Catalyzes the formation of L-cystathionine from homoserine esters and L-cysteine, via a gamma-replacement reaction. Substrate preference for cystathionine synthesis is O-phospho-L-homoserine (OPH) &gt; O(4)-succinyl-L-homoserine (OSH) &gt;&gt; O-acetyl-L-homoserine (OAH). Is able, at extremely low rate, to catalyze a gamma-elimination of OPH in the absence of cysteine to produce inorganic phosphate (Pi), 2-oxobutanoate and ammonia. This chain is Cystathionine gamma-synthase 1, chloroplastic, found in Arabidopsis thaliana (Mouse-ear cress).